A 439-amino-acid polypeptide reads, in one-letter code: Oxysterol-binding protein 6 (439 aa).

Disordered regions lie at residues 1 to 40 (MSAK…SGAD) and 409 to 439 (ESST…QTTN). Polar residues-rich tracts occupy residues 409-419 (ESSTPNLSKVD) and 429-439 (PVDNSIPQTTN).

This sequence belongs to the OSBP family.

This is Oxysterol-binding protein 6 (osbF) from Dictyostelium discoideum (Social amoeba).